We begin with the raw amino-acid sequence, 428 residues long: Enolase (428 aa).

Residue glutamine 164 coordinates (2R)-2-phosphoglycerate. Glutamate 206 (proton donor) is an active-site residue. Residues aspartate 243, glutamate 286, and aspartate 313 each coordinate Mg(2+). (2R)-2-phosphoglycerate-binding residues include lysine 338, arginine 367, serine 368, and lysine 389. The active-site Proton acceptor is the lysine 338.

Belongs to the enolase family. Mg(2+) serves as cofactor.

Its subcellular location is the cytoplasm. It is found in the secreted. It localises to the cell surface. The catalysed reaction is (2R)-2-phosphoglycerate = phosphoenolpyruvate + H2O. Its pathway is carbohydrate degradation; glycolysis; pyruvate from D-glyceraldehyde 3-phosphate: step 4/5. In terms of biological role, catalyzes the reversible conversion of 2-phosphoglycerate (2-PG) into phosphoenolpyruvate (PEP). It is essential for the degradation of carbohydrates via glycolysis. In Dehalococcoides mccartyi (strain ATCC BAA-2100 / JCM 16839 / KCTC 5957 / BAV1), this protein is Enolase.